The chain runs to 494 residues: UPF0371 protein SpyM3_1021 (494 aa).

The protein belongs to the UPF0371 family.

The sequence is that of UPF0371 protein SpyM3_1021 from Streptococcus pyogenes serotype M3 (strain ATCC BAA-595 / MGAS315).